Here is a 397-residue protein sequence, read N- to C-terminus: Ornithine aminotransferase (397 aa).

The residue at position 255 (Lys-255) is an N6-(pyridoxal phosphate)lysine.

It belongs to the class-III pyridoxal-phosphate-dependent aminotransferase family. OAT subfamily. Requires pyridoxal 5'-phosphate as cofactor.

It is found in the cytoplasm. It catalyses the reaction a 2-oxocarboxylate + L-ornithine = L-glutamate 5-semialdehyde + an L-alpha-amino acid. It functions in the pathway amino-acid biosynthesis; L-proline biosynthesis; L-glutamate 5-semialdehyde from L-ornithine: step 1/1. Catalyzes the interconversion of ornithine to glutamate semialdehyde. The polypeptide is Ornithine aminotransferase (Macrococcus caseolyticus (strain JCSC5402) (Macrococcoides caseolyticum)).